Consider the following 319-residue polypeptide: MITIALFLVLLYFHDQLGYSAAQLQFGFYSETCPSAESIVRDVVQQAVTNDPGKAAVLLRLQFHDCFVEGCDGSILIKHGGNDDERFAAGNAGVAGFDVIDEAKSELERFCPGVVSCADIVALAARDAIAEAKGPFYEVPTGRRDGLIANVDHAKNLPDVQDSINTLKSKFREKGLSDQDLVLLSAGAHTIGTTACFFVIPRLDAQDPTINPEFFQILRSKCPQGGDVNVRIPLDWDSQFVFDNQIFQNIKNGRGVILSDSVLYQDNNMKKIIDSYLETNQSSKANFAADFTKAMIKMGAIGVKIGAEGEIRRLCSATN.

The first 22 residues, 1–22 (MITIALFLVLLYFHDQLGYSAA), serve as a signal peptide directing secretion. 4 cysteine pairs are disulfide-bonded: C33–C111, C66–C71, C117–C315, and C196–C222. The active-site Proton acceptor is the H64. Ca(2+)-binding residues include D65, V68, G70, D72, and S74. P158 provides a ligand contact to substrate. A heme b-binding site is contributed by H189. Residue T190 coordinates Ca(2+). Ca(2+) is bound by residues D235, S238, and D243. Residue N280 is glycosylated (N-linked (GlcNAc...) asparagine).

Belongs to the peroxidase family. Classical plant (class III) peroxidase subfamily. Requires heme b as cofactor. Ca(2+) serves as cofactor.

It is found in the secreted. The enzyme catalyses 2 a phenolic donor + H2O2 = 2 a phenolic radical donor + 2 H2O. In terms of biological role, removal of H(2)O(2), oxidation of toxic reductants, biosynthesis and degradation of lignin, suberization, auxin catabolism, response to environmental stresses such as wounding, pathogen attack and oxidative stress. These functions might be dependent on each isozyme/isoform in each plant tissue. This Arabidopsis thaliana (Mouse-ear cress) protein is Peroxidase 13 (PER13).